The primary structure comprises 191 residues: Reticulon-like protein B15 (191 aa).

Residues 13–191 enclose the Reticulon domain; that stretch reads VADLCLWKDK…SKIPRAPKVE (179 aa). Transmembrane regions (helical) follow at residues 23–43, 47–67, and 122–142; these read INSG…EFME, VPLL…WAKF, and VAII…YICL.

It localises to the endoplasmic reticulum membrane. The sequence is that of Reticulon-like protein B15 (RTNLB15) from Arabidopsis thaliana (Mouse-ear cress).